A 621-amino-acid chain; its full sequence is Growth factor receptor-bound protein 10 (621 aa).

Composition is skewed to polar residues over residues 1-23 (MNND…SDTD) and 33-59 (HASN…QRSQ). Residues 1–118 (MNNDINSSVE…PSQPPAKHCG (118 aa)) are disordered. Phosphoserine occurs at positions 50 and 96. Residues 95–112 (GSPPSVAPSSLPPPPSQP) show a composition bias toward pro residues. Residues 194–278 (LRKDVKVFSE…SKFLFRKNYA (85 aa)) enclose the Ras-associating domain. One can recognise a PH domain in the interval 318 to 427 (CPEIQGFLQV…WMTAFRLLKY (110 aa)). Phosphoserine; by MTOR and PKB/AKT1 is present on serine 455. Residues serine 458 and serine 503 each carry the phosphoserine modification. The 82-residue stretch at 520-601 (WFHGRISREE…SDLIQLVDFY (82 aa)) folds into the SH2 domain.

This sequence belongs to the GRB7/10/14 family. Interacts with ligand-activated tyrosine kinase receptors, including FGFR1, INSR, IGF1R, MET and PDGFRB in a phosphotyrosine-dependent manner through the SH2 domain. Poorly binds to the EGFR. Directly interacts with MAP3K14/NIK and is recruited to the EGFR-ERBB2 complex. Interacts with GIGYF1/PERQ1 and GIGYF2/TNRC15. When unphosphorylated, interacts with AKT1 and when phosphorylated with YWHAE/14-3-3 epsilon. Interacts with NEDD4. Interacts with LRP6, thus interfering with the binding of AXIN1 to LRP6. Binds to activated NRAS. In terms of processing, phosphorylated on serine residues upon EGF, FGF and PDGF stimulation. Widely expressed.

It localises to the cytoplasm. Phosphorylation by mTORC1 stabilizes and activates GRB10 constituting a feedback pathway by which mTORC1 inhibits INSR-dependent signaling. Adapter protein which modulates coupling of a number of cell surface receptor kinases with specific signaling pathways. Binds to, and suppress signals from, activated receptors tyrosine kinases, including the insulin (INSR) and insulin-like growth factor (IGF1R) receptors. The inhibitory effect can be achieved by 2 mechanisms: interference with the signaling pathway and increased receptor degradation. Delays and reduces AKT1 phosphorylation in response to insulin stimulation. Blocks association between INSR and IRS1 and IRS2 and prevents insulin-stimulated IRS1 and IRS2 tyrosine phosphorylation. Recruits NEDD4 to IGF1R, leading to IGF1R ubiquitination, increased internalization and degradation by both the proteasomal and lysosomal pathways. A similar role in the mediation of ubiquitination also has been suggested with INSR. Negatively regulates Wnt signaling by interacting with LRP6 intracellular portion and interfering with the binding of AXIN1 to LRP6. Positive regulator of the KDR/VEGFR-2 signaling pathway. May inhibit NEDD4-mediated degradation of KDR/VEGFR-2. This Mus musculus (Mouse) protein is Growth factor receptor-bound protein 10 (Grb10).